We begin with the raw amino-acid sequence, 223 residues long: Phosphoribosylformylglycinamidine synthase subunit PurQ (223 aa).

One can recognise a Glutamine amidotransferase type-1 domain in the interval 3 to 223 (SAVVQLPGLN…FASALDVIAA (221 aa)). Residue cysteine 86 is the Nucleophile of the active site. Active-site residues include histidine 196 and glutamate 198.

Part of the FGAM synthase complex composed of 1 PurL, 1 PurQ and 2 PurS subunits.

Its subcellular location is the cytoplasm. It catalyses the reaction N(2)-formyl-N(1)-(5-phospho-beta-D-ribosyl)glycinamide + L-glutamine + ATP + H2O = 2-formamido-N(1)-(5-O-phospho-beta-D-ribosyl)acetamidine + L-glutamate + ADP + phosphate + H(+). It carries out the reaction L-glutamine + H2O = L-glutamate + NH4(+). Its pathway is purine metabolism; IMP biosynthesis via de novo pathway; 5-amino-1-(5-phospho-D-ribosyl)imidazole from N(2)-formyl-N(1)-(5-phospho-D-ribosyl)glycinamide: step 1/2. Its function is as follows. Part of the phosphoribosylformylglycinamidine synthase complex involved in the purines biosynthetic pathway. Catalyzes the ATP-dependent conversion of formylglycinamide ribonucleotide (FGAR) and glutamine to yield formylglycinamidine ribonucleotide (FGAM) and glutamate. The FGAM synthase complex is composed of three subunits. PurQ produces an ammonia molecule by converting glutamine to glutamate. PurL transfers the ammonia molecule to FGAR to form FGAM in an ATP-dependent manner. PurS interacts with PurQ and PurL and is thought to assist in the transfer of the ammonia molecule from PurQ to PurL. In Rhizobium meliloti (strain 1021) (Ensifer meliloti), this protein is Phosphoribosylformylglycinamidine synthase subunit PurQ.